The primary structure comprises 870 residues: Alanine--tRNA ligase (870 aa).

Residues His-585, His-589, Cys-689, and His-693 each contribute to the Zn(2+) site.

Belongs to the class-II aminoacyl-tRNA synthetase family. The cofactor is Zn(2+).

The protein resides in the cytoplasm. It catalyses the reaction tRNA(Ala) + L-alanine + ATP = L-alanyl-tRNA(Ala) + AMP + diphosphate. Catalyzes the attachment of alanine to tRNA(Ala) in a two-step reaction: alanine is first activated by ATP to form Ala-AMP and then transferred to the acceptor end of tRNA(Ala). Also edits incorrectly charged Ser-tRNA(Ala) and Gly-tRNA(Ala) via its editing domain. This is Alanine--tRNA ligase from Picrophilus torridus (strain ATCC 700027 / DSM 9790 / JCM 10055 / NBRC 100828 / KAW 2/3).